A 435-amino-acid chain; its full sequence is Methionine aminopeptidase 2 (435 aa).

Residues 1–87 (MAAQVADGVA…TQTKPPRVPV (87 aa)) form a disordered region. Over residues 10 to 19 (ADLKLDDTKS) the composition is skewed to basic and acidic residues. A compositionally biased stretch (polar residues) spans 20–29 (KPTNGTTQNG). Acidic residues predominate over residues 32–46 (EHEDSDDDNEGEEGA). Residues 55 to 68 (KKKKKRKPRKKKKA) show a composition bias toward basic residues. His199 is a substrate binding site. A divalent metal cation-binding residues include Asp219, Asp230, and His299. His307 serves as a coordination point for substrate. Residues Glu332 and Glu427 each contribute to the a divalent metal cation site.

It belongs to the peptidase M24A family. Methionine aminopeptidase eukaryotic type 2 subfamily. Co(2+) is required as a cofactor. It depends on Zn(2+) as a cofactor. Requires Mn(2+) as cofactor. The cofactor is Fe(2+).

It localises to the cytoplasm. It carries out the reaction Release of N-terminal amino acids, preferentially methionine, from peptides and arylamides.. Cotranslationally removes the N-terminal methionine from nascent proteins. The N-terminal methionine is often cleaved when the second residue in the primary sequence is small and uncharged (Met-Ala-, Cys, Gly, Pro, Ser, Thr, or Val). In Phaeosphaeria nodorum (strain SN15 / ATCC MYA-4574 / FGSC 10173) (Glume blotch fungus), this protein is Methionine aminopeptidase 2.